The primary structure comprises 283 residues: Tyrosine recombinase THA_404 (283 aa).

The region spanning 1-86 (MDKVIEMFSD…SLNSFFNYLE (86 aa)) is the Core-binding (CB) domain. The 175-residue stretch at 107–281 (KIPDFLTEDE…ADQEKFDAVK (175 aa)) folds into the Tyr recombinase domain. Catalysis depends on residues R145, K170, H233, R236, and H259. The active-site O-(3'-phospho-DNA)-tyrosine intermediate is Y268.

The protein belongs to the 'phage' integrase family.

It localises to the cytoplasm. In terms of biological role, site-specific tyrosine recombinase, which acts by catalyzing the cutting and rejoining of the recombining DNA molecules. The polypeptide is Tyrosine recombinase THA_404 (Thermosipho africanus (strain TCF52B)).